A 400-amino-acid chain; its full sequence is Multidrug resistance protein 2 (400 aa).

A run of 11 helical transmembrane segments spans residues isoleucine 11–proline 31, threonine 46–glycine 66, isoleucine 78–valine 98, isoleucine 106–isoleucine 126, alanine 142–isoleucine 162, methionine 164–leucine 184, isoleucine 213–alanine 233, isoleucine 253–glycine 273, phenylalanine 297–leucine 317, serine 346–leucine 366, and isoleucine 368–valine 388.

It belongs to the major facilitator superfamily. TCR/Tet family.

It is found in the cell membrane. Energy-dependent efflux pump responsible for decreased drug accumulation in multi-drug-resistant cells. Probably uses a transmembrane proton gradient as the energy source. Causes the efflux of a variety of toxic substances, including such structurally diverse compounds as ethidium bromide, rhodamine and acridine dyes, tetraphenylphosphonium, puromycin, chloramphenicol, doxorubicin, and fluoroquinolone antibiotics. In Bacillus subtilis (strain 168), this protein is Multidrug resistance protein 2 (blt).